Here is a 242-residue protein sequence, read N- to C-terminus: ATP-dependent dethiobiotin synthetase BioD (242 aa).

Position 15–20 (15–20) interacts with ATP; the sequence is DVGKTV. Thr19 serves as a coordination point for Mg(2+). Lys40 is a catalytic residue. Ser44 contacts substrate. Glu117 provides a ligand contact to Mg(2+). ATP-binding positions include 117–120, 178–179, and 208–210; these read EGAG, NQ, and PYS.

This sequence belongs to the dethiobiotin synthetase family. In terms of assembly, homodimer. Mg(2+) serves as cofactor.

It localises to the cytoplasm. The catalysed reaction is (7R,8S)-7,8-diammoniononanoate + CO2 + ATP = (4R,5S)-dethiobiotin + ADP + phosphate + 3 H(+). It functions in the pathway cofactor biosynthesis; biotin biosynthesis; biotin from 7,8-diaminononanoate: step 1/2. In terms of biological role, catalyzes a mechanistically unusual reaction, the ATP-dependent insertion of CO2 between the N7 and N8 nitrogen atoms of 7,8-diaminopelargonic acid (DAPA, also called 7,8-diammoniononanoate) to form a ureido ring. This is ATP-dependent dethiobiotin synthetase BioD from Halalkalibacterium halodurans (strain ATCC BAA-125 / DSM 18197 / FERM 7344 / JCM 9153 / C-125) (Bacillus halodurans).